The following is a 607-amino-acid chain: Glutamyl-tRNA(Gln) amidotransferase subunit E (607 aa).

Belongs to the GatB/GatE family. GatE subfamily. In terms of assembly, heterodimer of GatD and GatE.

The catalysed reaction is L-glutamyl-tRNA(Gln) + L-glutamine + ATP + H2O = L-glutaminyl-tRNA(Gln) + L-glutamate + ADP + phosphate + H(+). Allows the formation of correctly charged Gln-tRNA(Gln) through the transamidation of misacylated Glu-tRNA(Gln) in organisms which lack glutaminyl-tRNA synthetase. The reaction takes place in the presence of glutamine and ATP through an activated gamma-phospho-Glu-tRNA(Gln). The GatDE system is specific for glutamate and does not act on aspartate. This Pyrobaculum islandicum (strain DSM 4184 / JCM 9189 / GEO3) protein is Glutamyl-tRNA(Gln) amidotransferase subunit E.